A 64-amino-acid chain; its full sequence is Bacteriocin glycocin F (64 aa).

The first 21 residues, 1 to 21 (MSKLVKTLTISEISKAQNNGG), serve as a signal peptide directing secretion. Intrachain disulfides connect Cys26–Cys49 and Cys33–Cys42. Ser39 carries O-linked (GlcNAc) serine glycosylation. A glycan (S-linked (GlcNAc) cysteine) is linked at Cys64.

The protein resides in the secreted. Functionally, has antibacterial activity against L.plantarum ATCC 8014. In purified form, the activity is bacteriostatic (IC(50)=2 nM) rather than bactericidal. The polypeptide is Bacteriocin glycocin F (Lactiplantibacillus plantarum (Lactobacillus plantarum)).